The chain runs to 170 residues: Probable deoxyuridine 5'-triphosphate nucleotidohydrolase (170 aa).

The protein belongs to the dCTP deaminase family. Archaeal dUTPase subfamily.

It catalyses the reaction dUTP + H2O = dUMP + diphosphate + H(+). It participates in pyrimidine metabolism; dUMP biosynthesis; dUMP from dCTP (dUTP route): step 2/2. Functionally, this enzyme is involved in nucleotide metabolism: it produces dUMP, the immediate precursor of thymidine nucleotides and it decreases the intracellular concentration of dUTP so that uracil cannot be incorporated into DNA. The chain is Probable deoxyuridine 5'-triphosphate nucleotidohydrolase from Methanococcoides burtonii (strain DSM 6242 / NBRC 107633 / OCM 468 / ACE-M).